The primary structure comprises 335 residues: Putative serine/threonine-protein kinase 040L (335 aa).

One can recognise a Protein kinase domain in the interval 33–329; sequence YYYQEFHDEG…DRLTELHHHL (297 aa). ATP-binding positions include 39–47 and Lys-62; that span reads HDEGGYGSI. The Proton acceptor role is filled by Asp-196.

It belongs to the protein kinase superfamily. Ser/Thr protein kinase family.

This chain is Putative serine/threonine-protein kinase 040L, found in Invertebrate iridescent virus 3 (IIV-3).